Here is a 583-residue protein sequence, read N- to C-terminus: Putative ABC transporter ATP-binding protein exp8 (583 aa).

The 284-residue stretch at 25-308 (TFLALSFLLA…VTQNFSTLQT (284 aa)) folds into the ABC transmembrane type-1 domain. 5 helical membrane-spanning segments follow: residues 26–46 (FLALSFLLATTVIKSVIPLVA), 61–81 (AVTVLLVYYGLYILQTVVQYV), 135–155 (MFSGILSSFISAVFIFLTTLY), 159–179 (VLDFRLTALVLLFLPLIFLLV), and 259–279 (LGYAVLMAYFGYRGFSIGITV). In terms of domain architecture, ABC transporter spans 341–574 (IRFEHVCFSY…GGTYHKMYSL (234 aa)). Residue 374 to 381 (GHTGSGKS) participates in ATP binding.

Belongs to the ABC transporter superfamily.

It is found in the cell membrane. In Streptococcus pneumoniae serotype 4 (strain ATCC BAA-334 / TIGR4), this protein is Putative ABC transporter ATP-binding protein exp8 (exp8).